The chain runs to 407 residues: O-antigen polymerase (407 aa).

The next 11 helical transmembrane spans lie at 2-22, 31-51, 63-83, 101-121, 141-161, 168-185, 190-204, 211-231, 319-339, 356-376, and 382-402; these read LIIS…TLSV, VMVP…GIFV, YLFF…SYLY, YVFT…PVLM, YGIY…CAFF, LFCI…FLHG, IFSI…LSYI, FMFL…FFAY, ADFG…KGVL, FIMF…GWLF, and IAFM…RFVL.

It is found in the cell inner membrane. It catalyses the reaction n lipid-linked O-antigen repeat units = a lipid-linked O antigen + (n-1) polyisoprenyl diphosphate.. The protein operates within bacterial outer membrane biogenesis; LPS O-antigen biosynthesis. Its function is as follows. Polymerase involved in the biosynthesis of the lipopolysaccharide (LPS). Catalyzes the polymerization of the O-antigen repeat units on the periplasmic face of the inner membrane, leading to the formation of the lipid-linked O-antigen molecule. The polypeptide is O-antigen polymerase (rfc) (Salmonella typhi).